The chain runs to 105 residues: MFAVIKTGGKQYRVAANDVITIGKLEGDAGTAVTFGEVLLYADGDGATKVGAPTVAGVSVAGEIVAQTRGPKVIAFKKRRRQNSRRKRGHRQDFTVVRVTGISAA.

The protein belongs to the bacterial ribosomal protein bL21 family. In terms of assembly, part of the 50S ribosomal subunit. Contacts protein L20.

This protein binds to 23S rRNA in the presence of protein L20. This is Large ribosomal subunit protein bL21 from Methylobacterium sp. (strain 4-46).